The following is a 395-amino-acid chain: Terminal nucleotidyltransferase 5B (395 aa).

This sequence belongs to the TENT family.

The protein localises to the cytoplasm. It localises to the nucleus. The catalysed reaction is RNA(n) + ATP = RNA(n)-3'-adenine ribonucleotide + diphosphate. Its function is as follows. Catalyzes the transfer of one adenosine molecule from an ATP to an mRNA poly(A) tail bearing a 3'-OH terminal group in an ATP hydrolysis-dependent manner and participates in cytoplasmic polyadenylation. May be involved in maintaining the translation efficiency of at least some genes through preventing degradation of their mRNAs. This is Terminal nucleotidyltransferase 5B from Xenopus tropicalis (Western clawed frog).